We begin with the raw amino-acid sequence, 295 residues long: Acetylglutamate kinase (295 aa).

Residues 66-67, R88, and N193 each bind substrate; that span reads GG.

This sequence belongs to the acetylglutamate kinase family. ArgB subfamily.

It is found in the cytoplasm. It carries out the reaction N-acetyl-L-glutamate + ATP = N-acetyl-L-glutamyl 5-phosphate + ADP. It functions in the pathway amino-acid biosynthesis; L-arginine biosynthesis; N(2)-acetyl-L-ornithine from L-glutamate: step 2/4. Functionally, catalyzes the ATP-dependent phosphorylation of N-acetyl-L-glutamate. This Rhizobium leguminosarum bv. trifolii (strain WSM2304) protein is Acetylglutamate kinase.